A 654-amino-acid chain; its full sequence is Threonine--tRNA ligase (654 aa).

Residues 1–63 (MASINVKFPD…TTDGSIEIIA (63 aa)) form the TGS domain. The interval 248 to 546 (DHRVIGNELD…LTEIYKGAFP (299 aa)) is catalytic. Zn(2+)-binding residues include Cys342, His393, and His523.

Belongs to the class-II aminoacyl-tRNA synthetase family. As to quaternary structure, homodimer. Zn(2+) serves as cofactor.

The protein resides in the cytoplasm. It carries out the reaction tRNA(Thr) + L-threonine + ATP = L-threonyl-tRNA(Thr) + AMP + diphosphate + H(+). Functionally, catalyzes the attachment of threonine to tRNA(Thr) in a two-step reaction: L-threonine is first activated by ATP to form Thr-AMP and then transferred to the acceptor end of tRNA(Thr). Also edits incorrectly charged L-seryl-tRNA(Thr). The sequence is that of Threonine--tRNA ligase from Lactiplantibacillus plantarum (strain ATCC BAA-793 / NCIMB 8826 / WCFS1) (Lactobacillus plantarum).